The sequence spans 101 residues: Urease subunit beta (101 aa).

Belongs to the urease beta subunit family. In terms of assembly, heterotrimer of UreA (gamma), UreB (beta) and UreC (alpha) subunits. Three heterotrimers associate to form the active enzyme.

Its subcellular location is the cytoplasm. The catalysed reaction is urea + 2 H2O + H(+) = hydrogencarbonate + 2 NH4(+). It functions in the pathway nitrogen metabolism; urea degradation; CO(2) and NH(3) from urea (urease route): step 1/1. The chain is Urease subunit beta from Rhizobium rhizogenes (strain K84 / ATCC BAA-868) (Agrobacterium radiobacter).